Reading from the N-terminus, the 110-residue chain is Light-harvesting complex-like protein OHP1, chloroplastic (110 aa).

The transit peptide at Met-1 to Ala-41 directs the protein to the chloroplast. Residues Ala-42–Arg-74 are Stromal-facing. Residues Ala-75–Leu-95 form a helical membrane-spanning segment. The Lumenal portion of the chain corresponds to Glu-96 to Leu-110.

Belongs to the ELIP/psbS family. May bind chlorophyll and form dimers in the thylakoid membrane. Component of a high molecular weight complex containing OHP1, OHP2 and HCF244, and PSII core proteins D1/D2, HCF136 and HCF173. Interacts with HCF244. Forms a trimeric complex with OHP2 and HCF244 that mutually stabilizes each subunit. As to expression, mostly expressed in cotyledons and shoot apices.

It localises to the plastid. It is found in the chloroplast thylakoid membrane. May play a photoprotective role in the thylakoid membrane in response to light stress. Involved in photosystems I (PSI) and II (PSII) core proteins function. Forms a trimeric complex with OHP2 and HCF244 that is required to promote PSII core subunit assembly. The trimeric complex forms a transient PSII reaction center-like complex with PsbA, PsbD, PsbE, PsbF and PsbI subunits in thylakoids for early assembly of PSII as well as PSII repair. The trimeric complex is required for the recruitment of ribosomes to the psbA mRNA during PSII biogenesis and repair. Forms a heterodimer with OHP1 that binds chlorophylls and carotenoids, and that may function in the delivery of pigments to the PsbA subunit of PSII. The polypeptide is Light-harvesting complex-like protein OHP1, chloroplastic (Arabidopsis thaliana (Mouse-ear cress)).